Here is a 37-residue protein sequence, read N- to C-terminus: FDGRNAAGNDKMSALMALTTRGCCSHPVCSAMSPICG.

A propeptide spanning residues 1-21 is cleaved from the precursor; it reads FDGRNAAGNDKMSALMALTTR. Disulfide bonds link cysteine 23/cysteine 29 and cysteine 24/cysteine 36. Cysteine amide is present on cysteine 36.

This sequence belongs to the conotoxin A superfamily. In terms of processing, unmodified Met-32 is essential for toxin binding to rat alpha-3-beta-4/CHRNA3-CHRNB4 nAChR. An oxidation of this methionine provokes a 13.3-fold decrease in inhibitory potency (IC(50)=245 nM instead of 18 nM). Owing to its potent activity, derivatives of this toxin have a potential in the development of a novel drug. Unfortunately, the oxidation of the methionine is readily to happen during toxin synthesis and oxidation steps as well as under oxidative environment in vivo, which should still be considered to find a solution to this major drawback. Expressed by the venom duct.

Its subcellular location is the secreted. Alpha-conotoxins act on postsynaptic membranes, they bind to the nicotinic acetylcholine receptors (nAChR) and thus inhibit them. This toxin inhibits alpha-3-beta-4/CHRNA3-CHRNB4 (IC(50)=3.6-18.38 nM), alpha-6/alpha-3-beta-4 (CHRNA6/CHRNA3-CHRNB4) (IC(50)=33.9-94.1 nM), and alpha-2-beta-4/CHRNA2-CHRNB4 (IC(50)=4550 nM) nAChRs. The toxin competes with agonists in the orthosteric binding site of alpha-3-beta-4/CHRNA3-CHRNB4 and alpha-6-beta-4/CHRNA6-CHRNB4. The sequence is that of Alpha-conotoxin TxID from Conus textile (Cloth-of-gold cone).